The primary structure comprises 343 residues: S-adenosylmethionine:tRNA ribosyltransferase-isomerase (343 aa).

The protein belongs to the QueA family. Monomer.

The protein resides in the cytoplasm. The catalysed reaction is 7-aminomethyl-7-carbaguanosine(34) in tRNA + S-adenosyl-L-methionine = epoxyqueuosine(34) in tRNA + adenine + L-methionine + 2 H(+). Its pathway is tRNA modification; tRNA-queuosine biosynthesis. In terms of biological role, transfers and isomerizes the ribose moiety from AdoMet to the 7-aminomethyl group of 7-deazaguanine (preQ1-tRNA) to give epoxyqueuosine (oQ-tRNA). The chain is S-adenosylmethionine:tRNA ribosyltransferase-isomerase from Dehalococcoides mccartyi (strain ATCC BAA-2100 / JCM 16839 / KCTC 5957 / BAV1).